The chain runs to 404 residues: Argininosuccinate synthase (404 aa).

Residues 10–18 (AYSGGVDTS) and A38 contribute to the ATP site. Y89 serves as a coordination point for L-citrulline. Residue G119 coordinates ATP. Positions 121, 125, and 126 each coordinate L-aspartate. N125 contributes to the L-citrulline binding site. Residues R129, S177, S186, E262, and Y274 each coordinate L-citrulline.

The protein belongs to the argininosuccinate synthase family. Type 1 subfamily. Homotetramer.

The protein resides in the cytoplasm. It carries out the reaction L-citrulline + L-aspartate + ATP = 2-(N(omega)-L-arginino)succinate + AMP + diphosphate + H(+). It functions in the pathway amino-acid biosynthesis; L-arginine biosynthesis; L-arginine from L-ornithine and carbamoyl phosphate: step 2/3. The polypeptide is Argininosuccinate synthase (Prochlorococcus marinus subsp. pastoris (strain CCMP1986 / NIES-2087 / MED4)).